Here is a 187-residue protein sequence, read N- to C-terminus: HTH-type dhaKLM operon transcriptional activator DhaS (187 aa).

An HTH tetR-type domain is found at 12–72; the sequence is IITQKIIAKA…WIFENDFAEL (61 aa). A DNA-binding region (H-T-H motif) is located at residues 35-54; it reads SVSDIMQTAKIRRQTFYNYF.

As to quaternary structure, homodimer. Interacts with a homodimer of DhaQ.

In terms of biological role, in complex with DhaQ, upon activation by dihydroxyacetone, activates transcription of the dhaKLM operon. Binds the inverted repeat sequence 5'-GGACACATN(6)ATTTGTCC-3' located upstream of and partially overlapping with the -35 promoter sequence of the dhaKLM operon promoter. This chain is HTH-type dhaKLM operon transcriptional activator DhaS (dhaS), found in Lactococcus lactis subsp. lactis (strain IL1403) (Streptococcus lactis).